The primary structure comprises 567 residues: 25S rRNA (cytosine-C(5))-methyltransferase NSUN5 (567 aa).

The span at 1 to 17 (MVARRNKPKAPLVKHRF) shows a compositional bias: basic residues. Residues 1-88 (MVARRNKPKA…KTPPATKQKF (88 aa)) form a disordered region. Residues 312–318 (CSAPGNK), Glu336, Asp363, and Asp383 contribute to the S-adenosyl-L-methionine site. Cys444 functions as the Nucleophile in the catalytic mechanism.

It belongs to the class I-like SAM-binding methyltransferase superfamily. RsmB/NOP family.

It catalyses the reaction a cytidine in 25S rRNA + S-adenosyl-L-methionine = a 5-methylcytidine in 25S rRNA + S-adenosyl-L-homocysteine + H(+). S-adenosyl-L-methionine-dependent methyltransferase that specifically methylates the C(5) position of cytosine 2268 (m5C2268) in 25S rRNA. The polypeptide is 25S rRNA (cytosine-C(5))-methyltransferase NSUN5 (Arabidopsis thaliana (Mouse-ear cress)).